A 150-amino-acid chain; its full sequence is Endoribonuclease YbeY (150 aa).

His116, His120, and His126 together coordinate Zn(2+).

It belongs to the endoribonuclease YbeY family. Requires Zn(2+) as cofactor.

The protein localises to the cytoplasm. Its function is as follows. Single strand-specific metallo-endoribonuclease involved in late-stage 70S ribosome quality control and in maturation of the 3' terminus of the 16S rRNA. In Mesomycoplasma hyopneumoniae (strain 232) (Mycoplasma hyopneumoniae), this protein is Endoribonuclease YbeY.